Reading from the N-terminus, the 24-residue chain is KFGKVLKFLAKTLAKHLAKKQAQS.

As to expression, expressed by the venom gland.

The protein resides in the secreted. The polypeptide is Cupiennin-5a (Cupiennius salei (American wandering spider)).